Reading from the N-terminus, the 328-residue chain is UPF0421 protein SERP1427 (328 aa).

The next 4 helical transmembrane spans lie at 26 to 46 (LFCM…IVTI), 61 to 81 (LPAT…FGDQ), 109 to 129 (AVLT…FNFF), and 132 to 152 (LLTA…ILPP).

Belongs to the UPF0421 family.

It is found in the cell membrane. The chain is UPF0421 protein SERP1427 from Staphylococcus epidermidis (strain ATCC 35984 / DSM 28319 / BCRC 17069 / CCUG 31568 / BM 3577 / RP62A).